The following is a 104-amino-acid chain: Flagellar hook-basal body complex protein FliE (104 aa).

Belongs to the FliE family.

It is found in the bacterial flagellum basal body. This is Flagellar hook-basal body complex protein FliE from Pectobacterium atrosepticum (strain SCRI 1043 / ATCC BAA-672) (Erwinia carotovora subsp. atroseptica).